The sequence spans 546 residues: FAD-dependent monooxygenase (546 aa).

The first 17 residues, 1-17 (MYDVIVVGAGWCGLAAA), serve as a signal peptide directing secretion. I106 provides a ligand contact to FAD. N-linked (GlcNAc...) asparagine glycosylation is found at N239 and N343.

This sequence belongs to the FAD-binding monooxygenase family. The cofactor is FAD.

Its pathway is antifungal biosynthesis. In terms of biological role, FAD-dependent monooxygenase; part of the gene cluster that mediates the biosynthesis of the tetrahydropyranyl antifungal agent lanomycin that acts as an inhibitor of CYP51 and blocks the ergosterol biosynthesis. The biosynthesis probably begins with the formation of an hexaketide, followed by methionine mediated alkylation of C-2 and C-6, and methylation of the reduced C-3 oxygen, pyran forming reductive ring closure, oxygenation of C-4, beta-keto reduction, enoyl reduction and dehydration of the remaining oxygens, and finally, acylation with glycine to complete the biosynthesis. This is FAD-dependent monooxygenase from Pyrenophora dematioidea (Helminthosporium dematioideum).